We begin with the raw amino-acid sequence, 815 residues long: Phosphate transporter PHO1-2 (815 aa).

The Cytoplasmic segment spans residues methionine 1–threonine 421. In terms of domain architecture, SPX spans valine 2–serine 368. 3 disordered regions span residues serine 83–lysine 108, arginine 166–glutamine 213, and alanine 242–glycine 266. The segment covering proline 97–lysine 108 has biased composition (basic and acidic residues). Over residues proline 183–serine 201 the composition is skewed to low complexity. The span at proline 202–glutamine 213 shows a compositional bias: polar residues. Positions glycine 243–glycine 254 are enriched in basic and acidic residues. Residues lysine 255–glycine 266 show a composition bias toward gly residues. Residues phenylalanine 422–alanine 442 form a helical membrane-spanning segment. Residues histidine 443–glutamate 458 lie on the Extracellular side of the membrane. The chain crosses the membrane as a helical span at residues isoleucine 459–cysteine 479. Topologically, residues asparagine 480–alanine 508 are cytoplasmic. A helical membrane pass occupies residues phenylalanine 509–leucine 529. At lysine 530–asparagine 538 the chain is on the extracellular side. A helical transmembrane segment spans residues alanine 539–phenylalanine 559. Residues tyrosine 560–threonine 686 lie on the Cytoplasmic side of the membrane. An EXS domain is found at threonine 624–aspartate 815. Residues proline 687–tryptophan 707 form a helical membrane-spanning segment. The Extracellular segment spans residues aspartate 708–lysine 734. A helical transmembrane segment spans residues serine 735–tryptophan 751. The Cytoplasmic portion of the chain corresponds to threonine 752–aspartate 815.

It belongs to the SYG1 (TC 2.A.94) family. Specifically expressed in roots.

It localises to the cell membrane. Involved in the transfer of inorganic phosphate (Pi) from roots to shoots. The sequence is that of Phosphate transporter PHO1-2 (PHO1-2) from Oryza sativa subsp. japonica (Rice).